The chain runs to 463 residues: Argininosuccinate lyase (463 aa).

It belongs to the lyase 1 family. Argininosuccinate lyase subfamily.

It is found in the cytoplasm. The catalysed reaction is 2-(N(omega)-L-arginino)succinate = fumarate + L-arginine. It participates in amino-acid biosynthesis; L-arginine biosynthesis; L-arginine from L-ornithine and carbamoyl phosphate: step 3/3. The sequence is that of Argininosuccinate lyase from Staphylococcus epidermidis (strain ATCC 35984 / DSM 28319 / BCRC 17069 / CCUG 31568 / BM 3577 / RP62A).